The following is a 57-amino-acid chain: Potassium channel toxin alpha-KTx 26.3 (57 aa).

The signal sequence occupies residues 1–15; it reads MSGLSVFILIALVLS. Positions 16-24 are excised as a propeptide; it reads VIIDVLNNS. 3 cysteine pairs are disulfide-bonded: cysteine 30–cysteine 48, cysteine 34–cysteine 53, and cysteine 38–cysteine 55.

The protein belongs to the short scorpion toxin superfamily. Potassium channel inhibitor family. Alpha-KTx 26 subfamily. Expressed by the venom gland.

It localises to the secreted. Functionally, recombinant toxin that reversibly inhibits the potassium current of mKv1.3/KCNA3 channel stably expressed in COS7 cells (IC(50)=150 nM). This is Potassium channel toxin alpha-KTx 26.3 from Mesobuthus gibbosus (Mediterranean checkered scorpion).